Reading from the N-terminus, the 103-residue chain is Co-chaperonin GroES (103 aa).

This sequence belongs to the GroES chaperonin family. In terms of assembly, heptamer of 7 subunits arranged in a ring. Interacts with the chaperonin GroEL.

Its subcellular location is the cytoplasm. Together with the chaperonin GroEL, plays an essential role in assisting protein folding. The GroEL-GroES system forms a nano-cage that allows encapsulation of the non-native substrate proteins and provides a physical environment optimized to promote and accelerate protein folding. GroES binds to the apical surface of the GroEL ring, thereby capping the opening of the GroEL channel. This chain is Co-chaperonin GroES, found in Prochlorococcus marinus (strain SARG / CCMP1375 / SS120).